A 624-amino-acid chain; its full sequence is Chaperone protein DnaK (624 aa).

T174 carries the phosphothreonine; by autocatalysis modification. Disordered stretches follow at residues 544–563 (KKAQ…DDLS) and 576–624 (NAQK…DDKK). Residues 581–600 (QQAQGGPASGAATDAGAAQG) show a composition bias toward low complexity. The segment covering 601–624 (SDDKKSDDDTINGDYKDVSDDDKK) has biased composition (basic and acidic residues).

Belongs to the heat shock protein 70 family.

In terms of biological role, acts as a chaperone. This is Chaperone protein DnaK from Lacticaseibacillus casei (strain BL23) (Lactobacillus casei).